Here is a 248-residue protein sequence, read N- to C-terminus: MARTFFVGGNFKLNGSKQSIKEIVERLNTASIPENVEVVICPPATYLDYSVSLVKKPQVTVGAQNAYLKASGAFTGENSVDQIKDVGAKWVILGHSERRSYFHEDDKFIADKTKFALGQGVGVILCIGETLEEKKAGKTLDVVERQLNAVLEEVKDWTNVVVAYEPVWAIGTGLAATPEDAQDIHASIRKFLASKLGDKAASELRILYGGSANGSNAVTFKDKADVDGFLVGGASLKPEFVDIINSRN.

The residue at position 4 (threonine 4) is a Phosphothreonine. Residues asparagine 10 and lysine 12 each coordinate substrate. Position 71 is a phosphoserine (serine 71). Histidine 95 acts as the Electrophile in catalysis. The active-site Proton acceptor is the glutamate 165. A Phosphoserine modification is found at serine 215. A Glycyl lysine isopeptide (Lys-Gly) (interchain with G-Cter in ubiquitin) cross-link involves residue lysine 223.

This sequence belongs to the triosephosphate isomerase family. Homodimer.

It catalyses the reaction D-glyceraldehyde 3-phosphate = dihydroxyacetone phosphate. The protein operates within carbohydrate biosynthesis; gluconeogenesis. It functions in the pathway carbohydrate degradation; glycolysis; D-glyceraldehyde 3-phosphate from glycerone phosphate: step 1/1. The polypeptide is Triosephosphate isomerase (TPI1) (Saccharomyces cerevisiae (strain ATCC 204508 / S288c) (Baker's yeast)).